Consider the following 195-residue polypeptide: Probable GTP-binding protein EngB (195 aa).

Residues 24 to 195 (ELPEIALAGR…EAWDAILEKL (172 aa)) form the EngB-type G domain. GTP is bound by residues 32-39 (GRSNVGKS), 59-63 (GKTQL), 77-80 (DVPG), 144-147 (TKAD), and 176-178 (FSS). Mg(2+)-binding residues include S39 and T61.

The protein belongs to the TRAFAC class TrmE-Era-EngA-EngB-Septin-like GTPase superfamily. EngB GTPase family. Mg(2+) serves as cofactor.

Its function is as follows. Necessary for normal cell division and for the maintenance of normal septation. This Streptococcus pneumoniae serotype 4 (strain ATCC BAA-334 / TIGR4) protein is Probable GTP-binding protein EngB.